Reading from the N-terminus, the 437-residue chain is Protein PhoH2 (437 aa).

Residues 7 to 134 (RTYVLDTSVL…LVSKDIPLRV (128 aa)) form the PINc domain.

The protein in the N-terminal section; belongs to the PINc/VapC protein family. This sequence in the C-terminal section; belongs to the PhoH family. Interacts with antitoxin PhoAT. It depends on Mg(2+) as a cofactor.

It catalyses the reaction n ATP + n H2O + wound RNA = n ADP + n phosphate + unwound RNA.. It carries out the reaction ATP + H2O = ADP + phosphate + H(+). The enzyme catalyses GTP + H2O = GDP + phosphate + H(+). Its function is as follows. Toxic component of a type II toxin-antitoxin (TA) system. The possible cognate antitoxin is PhoAT; the toxin gene can be expressed in the absence of the antitoxin gene in an endogenous mc(2)155 double deletion. Unwinds and/or cleaves 5'-tailed RNA in vitro that starts with 5'-AC, the reaction requires hydrolyzable ATP; double-stranded (ds)RNA and dsDNA are not unwound or cleaved. Has ATPase and GTPase activities. The sequence is that of Protein PhoH2 from Mycolicibacterium smegmatis (strain ATCC 700084 / mc(2)155) (Mycobacterium smegmatis).